A 350-amino-acid polypeptide reads, in one-letter code: Nicotinate-nucleotide--dimethylbenzimidazole phosphoribosyltransferase (350 aa).

Glu-318 serves as the catalytic Proton acceptor.

This sequence belongs to the CobT family.

It carries out the reaction 5,6-dimethylbenzimidazole + nicotinate beta-D-ribonucleotide = alpha-ribazole 5'-phosphate + nicotinate + H(+). Its pathway is nucleoside biosynthesis; alpha-ribazole biosynthesis; alpha-ribazole from 5,6-dimethylbenzimidazole: step 1/2. Catalyzes the synthesis of alpha-ribazole-5'-phosphate from nicotinate mononucleotide (NAMN) and 5,6-dimethylbenzimidazole (DMB). The chain is Nicotinate-nucleotide--dimethylbenzimidazole phosphoribosyltransferase from Citrifermentans bemidjiense (strain ATCC BAA-1014 / DSM 16622 / JCM 12645 / Bem) (Geobacter bemidjiensis).